Consider the following 254-residue polypeptide: PF03932 family protein CutC (254 aa).

This sequence belongs to the CutC family.

The protein localises to the cytoplasm. The protein is PF03932 family protein CutC of Yersinia pseudotuberculosis serotype I (strain IP32953).